A 283-amino-acid chain; its full sequence is MKFMRIVRILAILLALIIGTSLCGCLNDSKSEADELIKMLPVDYNGFVYVNFKNIEDSKYSSEYRSKILNALRLGNANGEKTGIYINKTKRMIFSGSGYDRFVIIIEGDYDFDKFKNHLKEIGVNPVEEYGGFKIYTKPNDDKIALTFYKDMIIAGTKQGVYDCINVINGEMDSLLKNREVMEIYDRLPSDACVYEVSGTYSPWYKTVAEGMSISFENNDRVKVVRVEKYKDEETAKEKYEELLKKKDRDKEEMEKKGITADIKLDGQYLIVTVEGPEDELKI.

This is an uncharacterized protein from Methanocaldococcus jannaschii (strain ATCC 43067 / DSM 2661 / JAL-1 / JCM 10045 / NBRC 100440) (Methanococcus jannaschii).